We begin with the raw amino-acid sequence, 236 residues long: uncharacterized protein (236 aa).

Residues 1–24 form the signal peptide; it reads MRKKHFNMILKLALISSLLALAAS. Asn-59, Asn-171, and Asn-197 each carry an N-linked (GlcNAc...) asparagine glycan.

The protein resides in the secreted. This is an uncharacterized protein from Caenorhabditis elegans.